A 460-amino-acid polypeptide reads, in one-letter code: tRNA-2-methylthio-N(6)-dimethylallyladenosine synthase (460 aa).

Residues 10–126 (GSYWITTFGC…LEVLLNRVDS (117 aa)) enclose the MTTase N-terminal domain. 6 residues coordinate [4Fe-4S] cluster: Cys19, Cys55, Cys89, Cys161, Cys165, and Cys168. Residues 147–384 (RDSSICGWVN…NALVERCARE (238 aa)) enclose the Radical SAM core domain. The TRAM domain occupies 387–455 (ARYAGRTEEV…SFSLSGTPLP (69 aa)).

Belongs to the methylthiotransferase family. MiaB subfamily. Monomer. Requires [4Fe-4S] cluster as cofactor.

The protein localises to the cytoplasm. The enzyme catalyses N(6)-dimethylallyladenosine(37) in tRNA + (sulfur carrier)-SH + AH2 + 2 S-adenosyl-L-methionine = 2-methylsulfanyl-N(6)-dimethylallyladenosine(37) in tRNA + (sulfur carrier)-H + 5'-deoxyadenosine + L-methionine + A + S-adenosyl-L-homocysteine + 2 H(+). Functionally, catalyzes the methylthiolation of N6-(dimethylallyl)adenosine (i(6)A), leading to the formation of 2-methylthio-N6-(dimethylallyl)adenosine (ms(2)i(6)A) at position 37 in tRNAs that read codons beginning with uridine. The sequence is that of tRNA-2-methylthio-N(6)-dimethylallyladenosine synthase from Parasynechococcus marenigrum (strain WH8102).